Consider the following 72-residue polypeptide: Translation initiation factor IF-1 (72 aa).

The 72-residue stretch at 1–72 (MSKEDMIEFS…TKGRITFRFK (72 aa)) folds into the S1-like domain.

This sequence belongs to the IF-1 family. Component of the 30S ribosomal translation pre-initiation complex which assembles on the 30S ribosome in the order IF-2 and IF-3, IF-1 and N-formylmethionyl-tRNA(fMet); mRNA recruitment can occur at any time during PIC assembly.

It is found in the cytoplasm. In terms of biological role, one of the essential components for the initiation of protein synthesis. Stabilizes the binding of IF-2 and IF-3 on the 30S subunit to which N-formylmethionyl-tRNA(fMet) subsequently binds. Helps modulate mRNA selection, yielding the 30S pre-initiation complex (PIC). Upon addition of the 50S ribosomal subunit IF-1, IF-2 and IF-3 are released leaving the mature 70S translation initiation complex. The polypeptide is Translation initiation factor IF-1 (Acidiphilium cryptum (strain JF-5)).